We begin with the raw amino-acid sequence, 410 residues long: Magnesium transporter NIPA3 (410 aa).

At 1 to 67 (MGAQVRLPPG…ISANVENKYS (67 aa)) the chain is on the extracellular side. N-linked (GlcNAc...) asparagine glycans are attached at residues Asn25, Asn35, and Asn50. Residues 68–88 (LYVGLVLAVSSSIFIGSSFIL) traverse the membrane as a helical segment. Topologically, residues 89–114 (KKKGLLQLASKGITRAGQGGHSYLKE) are cytoplasmic. Residues 115–135 (WLWWVGLLSMGVGEAANFAAY) form a helical membrane-spanning segment. Position 136 (Ala136) is a topological domain, extracellular. Residues 137–157 (FAPATLVTPLGALSVLISAIL) traverse the membrane as a helical segment. Residues 158–165 (SSYFLNEH) are Cytoplasmic-facing. Residues 166-186 (LNIHGKIGCILSILGSTVMVI) form a helical membrane-spanning segment. The Extracellular segment spans residues 187 to 207 (HAPQEEEVTSLHEMEMKLRDP). The helical transmembrane segment at 208–228 (GFISFAVIVTVISLVLILIVA) threads the bilayer. The Cytoplasmic segment spans residues 229 to 233 (PKKGQ). Residues 234 to 254 (TNILVYISICSLIGAFSVSSV) traverse the membrane as a helical segment. Residues 255-273 (KGLGIAIKELIEWKPVYKH) are Extracellular-facing. A helical membrane pass occupies residues 274–294 (PLVFVLLAVLVLSVTTQINYL). Topologically, residues 295–304 (NKALDTFNTS) are cytoplasmic. The chain crosses the membrane as a helical span at residues 305 to 325 (IVTPIYYVFFTSMVVTCSAIL). The Extracellular segment spans residues 326–336 (FQEWYGMTAGD). The chain crosses the membrane as a helical span at residues 337–357 (IIGTLSGFFTIIIGIFLLHAF). The Cytoplasmic segment spans residues 358–410 (KNTDITWSELTSTAKKEAVSLNVSENNYVLLENLECSAPGYNDDVTLFSRTDD).

It belongs to the NIPA family.

It localises to the golgi apparatus membrane. The catalysed reaction is Mg(2+)(in) = Mg(2+)(out). Functionally, acts as a Mg(2+) transporter. Can also transport other divalent cations such as Fe(2+), Sr(2+), Ba(2+), Mn(2+), Cu(2+) and Co(2+) but to a much less extent than Mg(2+). The protein is Magnesium transporter NIPA3 (NIPAL1) of Pongo abelii (Sumatran orangutan).